Reading from the N-terminus, the 449-residue chain is GTPase Der (449 aa).

2 consecutive EngA-type G domains span residues 3-167 and 178-351; these read AVIA…PTSE and PRIA…IDSR. Residues 9-16, 56-60, 119-122, 184-191, 231-235, and 296-299 each bind GTP; these read GRPNVGKS, DTGGF, NKMD, DTAGM, and NKWD. The KH-like domain occupies 352–436; the sequence is RHFSTAELNR…PLRLVFRQGE (85 aa).

This sequence belongs to the TRAFAC class TrmE-Era-EngA-EngB-Septin-like GTPase superfamily. EngA (Der) GTPase family. As to quaternary structure, associates with the 50S ribosomal subunit.

In terms of biological role, GTPase that plays an essential role in the late steps of ribosome biogenesis. This chain is GTPase Der, found in Acidithiobacillus ferrooxidans (strain ATCC 23270 / DSM 14882 / CIP 104768 / NCIMB 8455) (Ferrobacillus ferrooxidans (strain ATCC 23270)).